A 121-amino-acid polypeptide reads, in one-letter code: C-type natriuretic peptide 4 (121 aa).

A signal peptide spans 1 to 22; sequence MNLSYLVACGLLVTFLSDKMDA. The propeptide occupies 23–96; sequence QPLTPAQQKS…SRRHKSGSKK (74 aa). Residues 80–109 form a disordered region; that stretch reads LLNDQPASRRHKSGSKKGGSTSRSGCFGHK. An intrachain disulfide couples Cys-105 to Cys-121.

The protein belongs to the natriuretic peptide family. Brain, spinal cord, spleen, heart and fin, and to a lower extent in gill and ovary.

The protein localises to the secreted. In terms of biological role, exhibits natriuretic and vasodepressant activity. Has cGMP-stimulating activity. May help to regulate body fluid homeostasis in a variety of aquatic environments. In Oryzias latipes (Japanese rice fish), this protein is C-type natriuretic peptide 4.